Consider the following 380-residue polypeptide: QRFP-like peptide receptor (380 aa).

Residues 1–51 (MMLGNMTFTQTILHELLRQHNMTKNEFIERFGLPPLVYVPELSPGAKTVTL) lie on the Extracellular side of the membrane. Residues N5 and N21 are each glycosylated (N-linked (GlcNAc...) asparagine). Residues 52–72 (VFYVIIFLAALLGNTLVVVVV) form a helical membrane-spanning segment. The Cytoplasmic segment spans residues 73–83 (WKNKVMRTTMN). A helical membrane pass occupies residues 84-104 (IFICSLAASDLLITIVCIPVT). Residues 105 to 122 (LMQNMLQNWIMGDFMCKL) are Extracellular-facing. C120 and C203 are oxidised to a cystine. The chain crosses the membrane as a helical span at residues 123 to 143 (VPFIQTIAVASSILTLTGIAI). The Cytoplasmic segment spans residues 144–164 (ERYYAIIHPLKVKYLLSKTRA). A helical transmembrane segment spans residues 165 to 185 (GIILALVWVVSVGVATPMLFV). The Extracellular portion of the chain corresponds to 186–216 (HKAEEIHDFLYEQRFVTCQEKWWGQTQQTSY). The chain crosses the membrane as a helical span at residues 217–237 (TIFNLVVLFIIPLLTMTSLYI). At 238–269 (RIAHRLWVQQPVGVTGNFAHGNSVRRKRQAVK) the chain is on the cytoplasmic side. A helical membrane pass occupies residues 270-290 (MLVVVVLLFAVCWLPYHTVTV). The Extracellular portion of the chain corresponds to 291–305 (MNELTGLRLEEKSAK). The helical transmembrane segment at 306 to 326 (LLIAIVQLIAFSNSFNNPVVY) threads the bilayer. Residues 327–380 (AILNENFKKNFMTMLRCRVNRVSPQQVTPNTLQTPLEQSTRSCRLPAGAPNQQI) lie on the Cytoplasmic side of the membrane.

This sequence belongs to the G-protein coupled receptor 1 family.

Its subcellular location is the cell membrane. Receptor for QRFP-like peptide. The activity of this receptor is mediated by G proteins which activate a phosphatidyl-inositol-calcium second messenger system. The sequence is that of QRFP-like peptide receptor from Branchiostoma floridae (Florida lancelet).